A 549-amino-acid chain; its full sequence is Frizzled-7-A (549 aa).

Residues methionine 1–glutamine 22 form the signal peptide. The Extracellular portion of the chain corresponds to tyrosine 23–tryptophan 231. The FZ domain maps to proline 32–glutamine 151. 5 cysteine pairs are disulfide-bonded: cysteine 37-cysteine 98, cysteine 45-cysteine 91, cysteine 82-cysteine 119, cysteine 108-cysteine 148, and cysteine 112-cysteine 136. N-linked (GlcNAc...) asparagine glycosylation occurs at asparagine 51. N-linked (GlcNAc...) asparagine glycosylation is present at asparagine 152. Residues valine 232–valine 252 form a helical membrane-spanning segment. Residues aspartate 253–proline 263 are Cytoplasmic-facing. A helical membrane pass occupies residues isoleucine 264–leucine 284. The Extracellular segment spans residues glutamate 285–cysteine 311. A helical membrane pass occupies residues threonine 312–leucine 332. Residues serine 333–glutamine 354 are Cytoplasmic-facing. The chain crosses the membrane as a helical span at residues tyrosine 355–glycine 375. Residues glutamine 376–glycine 398 are Extracellular-facing. Residues phenylalanine 399–phenylalanine 419 traverse the membrane as a helical segment. The Cytoplasmic segment spans residues valine 420–arginine 445. The helical transmembrane segment at isoleucine 446–tyrosine 466 threads the bilayer. The Extracellular segment spans residues glutamate 467–threonine 503. The helical transmembrane segment at valine 504 to tryptophan 524 threads the bilayer. Residues serine 525 to valine 549 are Cytoplasmic-facing. The Lys-Thr-X-X-X-Trp motif, mediates interaction with the PDZ domain of Dvl family members signature appears at lysine 527 to tryptophan 532. Residues threonine 547–valine 549 carry the PDZ-binding motif.

It belongs to the G-protein coupled receptor Fz/Smo family. Interacts with wnt11 and sdc4. The extracellular domain interacts with the extracellular domain of pcdh8/papc. In terms of tissue distribution, expressed in the animal region of cleavage stage embryos. During gastrulation, broadly expressed on the dorsal side of the embryo in deep mesodermal cells surrounding the blastopore lip and in presumptive anterior neuroectoderm. During neurulation, becomes progressively more restricted to the dorsal epidermis, neural plate, and neural tube. Expressed in the cranial neural crest of neurulae and tailbud embryos as well as the pronephros of tailbud embryos. Localized to the brain of neurulae, tailbud embryos and tadpoles. In tadpoles, strongly expressed in the eye and developing heart.

Its subcellular location is the cell membrane. The protein resides in the endosome membrane. Receptor for Wnt proteins. Acts in both canonical and non-canonical Wnt pathways. Although different papers report differing Wnt preferences, wnt5a, wnt8b and wnt11 have been proposed as synergists. In the canonical Wnt pathway, acts via beta-catenin to promote the expression of the dorsal genes siamois, twin and nodal3 and to establish the dorsal axis of the embryo and induce dorsal mesoderm formation. In a non-canonical Wnt/planar cell polarity (PCP) pathway, acts with sdc4 and dvl2/dsh to regulate convergent extension cell movements during gastrulation. Triggers phosphorylation of dvl2/dsh and its translocation to the plasma membrane. In a third branch of Wnt signaling, acts in a non-canonical pathway via trimeric G proteins, and independently of dvl2/dsh, to recruit protein kinase C (PKC) to the membrane and thus activate PKC. PKC signaling controls cell sorting and tissue separation during gastrulation. In Xenopus laevis (African clawed frog), this protein is Frizzled-7-A (fzd7-a).